The sequence spans 175 residues: RNA pyrophosphohydrolase (175 aa).

Residues 6-149 (GYRPNVGIIL…KRQVYQQALT (144 aa)) enclose the Nudix hydrolase domain. A Nudix box motif is present at residues 38 to 59 (GGIKHGESPEQAMYRELYEEVG).

The protein belongs to the Nudix hydrolase family. RppH subfamily. A divalent metal cation is required as a cofactor.

Functionally, accelerates the degradation of transcripts by removing pyrophosphate from the 5'-end of triphosphorylated RNA, leading to a more labile monophosphorylated state that can stimulate subsequent ribonuclease cleavage. The polypeptide is RNA pyrophosphohydrolase (Azoarcus sp. (strain BH72)).